Here is a 373-residue protein sequence, read N- to C-terminus: Histidinol-phosphate aminotransferase (373 aa).

Lysine 233 carries the post-translational modification N6-(pyridoxal phosphate)lysine.

It belongs to the class-II pyridoxal-phosphate-dependent aminotransferase family. Histidinol-phosphate aminotransferase subfamily. As to quaternary structure, homodimer. Pyridoxal 5'-phosphate serves as cofactor.

The catalysed reaction is L-histidinol phosphate + 2-oxoglutarate = 3-(imidazol-4-yl)-2-oxopropyl phosphate + L-glutamate. It functions in the pathway amino-acid biosynthesis; L-histidine biosynthesis; L-histidine from 5-phospho-alpha-D-ribose 1-diphosphate: step 7/9. This chain is Histidinol-phosphate aminotransferase, found in Nitratidesulfovibrio vulgaris (strain DP4) (Desulfovibrio vulgaris).